Reading from the N-terminus, the 293-residue chain is MATEVSQLLLAVVQGIPAGATNDDLTKALPDVPAATRVEALNILLQEGGIEILKKGEKLVYRAKDPEKKSALPKDADNEEKVVYGIVEEGGNKGIWIRDIRMKSNLNMIQLNKILKNLETKKLIKAVKSVNASKKKVYMLYNLEPDLSITGGAWYQDQDFEVEFVDVLNQQCLRFLQMKRDSAEKKREGPLAFKQMSCCTVNEVQKFISDLGISKVNLAEADLETILKTVVYDGNAERVRQQDGSFVYRAVNAPLPPTGLVQMPCGICPVIKNCSNCGDVTAITCEYMRDWLD.

This sequence belongs to the eukaryotic RPC34/RPC39 RNA polymerase subunit family. As to quaternary structure, component of the RNA polymerase III (Pol III) complex consisting of 17 subunits.

Its subcellular location is the nucleus. In terms of biological role, DNA-dependent RNA polymerase catalyzes the transcription of DNA into RNA using the four ribonucleoside triphosphates as substrates. Specific peripheric component of RNA polymerase III which synthesizes small RNAs, such as 5S rRNA and tRNAs. The protein is DNA-directed RNA polymerase III subunit RPC6 of Drosophila melanogaster (Fruit fly).